A 240-amino-acid polypeptide reads, in one-letter code: MKLLIWGLSGTMGNLISVAAQKDSHWSNIAGVDAKNPTSNLKHTPEVIIDFSHPSALEGVLDYAMAHGVPLVIGTTGFEKEHLEAIDQAAKHIPVLQATNMSLGMNILFSLVEQVAGMLKNKADIEVIESHHNRKMDAPSGSAVTIVECIEKGLGEARKHQHGREGQCPREKGEIGVHAIRGGNIVGFHEANFINELETVKVSHEAHDRSVFAQGALEAAKFVVNQPTGLYHMKDVLGLT.

7 to 12 (GLSGTM) provides a ligand contact to NAD(+). Lys35 contacts NADP(+). Residues 74–76 (GTT) and 98–101 (ATNM) contribute to the NAD(+) site. The active-site Proton donor/acceptor is the His131. Residue His132 coordinates (S)-2,3,4,5-tetrahydrodipicolinate. Catalysis depends on Lys135, which acts as the Proton donor. Residue 141-142 (GS) participates in (S)-2,3,4,5-tetrahydrodipicolinate binding.

Belongs to the DapB family.

It localises to the cytoplasm. The catalysed reaction is (S)-2,3,4,5-tetrahydrodipicolinate + NAD(+) + H2O = (2S,4S)-4-hydroxy-2,3,4,5-tetrahydrodipicolinate + NADH + H(+). It catalyses the reaction (S)-2,3,4,5-tetrahydrodipicolinate + NADP(+) + H2O = (2S,4S)-4-hydroxy-2,3,4,5-tetrahydrodipicolinate + NADPH + H(+). It functions in the pathway amino-acid biosynthesis; L-lysine biosynthesis via DAP pathway; (S)-tetrahydrodipicolinate from L-aspartate: step 4/4. In terms of biological role, catalyzes the conversion of 4-hydroxy-tetrahydrodipicolinate (HTPA) to tetrahydrodipicolinate. The protein is 4-hydroxy-tetrahydrodipicolinate reductase of Alkaliphilus metalliredigens (strain QYMF).